Here is a 161-residue protein sequence, read N- to C-terminus: Endoribonuclease YbeY (161 aa).

His-121, His-125, and His-131 together coordinate Zn(2+).

This sequence belongs to the endoribonuclease YbeY family. The cofactor is Zn(2+).

The protein localises to the cytoplasm. In terms of biological role, single strand-specific metallo-endoribonuclease involved in late-stage 70S ribosome quality control and in maturation of the 3' terminus of the 16S rRNA. The chain is Endoribonuclease YbeY from Xanthomonas euvesicatoria pv. vesicatoria (strain 85-10) (Xanthomonas campestris pv. vesicatoria).